A 187-amino-acid chain; its full sequence is Protein TfaD (187 aa).

In the C-terminal section; belongs to the tfa family.

The chain is Protein TfaD (tfaD) from Escherichia coli (strain K12).